A 264-amino-acid chain; its full sequence is Thymidylate synthase (264 aa).

Residue Arg-21 coordinates dUMP. A (6R)-5,10-methylene-5,6,7,8-tetrahydrofolate-binding site is contributed by His-51. 126–127 (RR) is a dUMP binding site. The active-site Nucleophile is Cys-146. DUMP contacts are provided by residues 166 to 169 (RSAD), Asn-177, and 207 to 209 (HLY). Position 169 (Asp-169) interacts with (6R)-5,10-methylene-5,6,7,8-tetrahydrofolate. Ala-263 is a binding site for (6R)-5,10-methylene-5,6,7,8-tetrahydrofolate.

The protein belongs to the thymidylate synthase family. Bacterial-type ThyA subfamily. Homodimer.

It is found in the cytoplasm. It catalyses the reaction dUMP + (6R)-5,10-methylene-5,6,7,8-tetrahydrofolate = 7,8-dihydrofolate + dTMP. It functions in the pathway pyrimidine metabolism; dTTP biosynthesis. In terms of biological role, catalyzes the reductive methylation of 2'-deoxyuridine-5'-monophosphate (dUMP) to 2'-deoxythymidine-5'-monophosphate (dTMP) while utilizing 5,10-methylenetetrahydrofolate (mTHF) as the methyl donor and reductant in the reaction, yielding dihydrofolate (DHF) as a by-product. This enzymatic reaction provides an intracellular de novo source of dTMP, an essential precursor for DNA biosynthesis. The protein is Thymidylate synthase of Bartonella tribocorum (strain CIP 105476 / IBS 506).